A 232-amino-acid polypeptide reads, in one-letter code: Ribonuclease 3 (232 aa).

Positions 5–134 constitute an RNase III domain; it reads QTVLKNHFAI…FLGALLLDKD (130 aa). Mg(2+) is bound at residue glutamate 47. Aspartate 51 is an active-site residue. Positions 120 and 123 each coordinate Mg(2+). Glutamate 123 is an active-site residue. One can recognise a DRBM domain in the interval 160–229; the sequence is DYKTHLQELL…AKNAVEKGLD (70 aa).

Belongs to the ribonuclease III family. In terms of assembly, homodimer. Mg(2+) serves as cofactor.

It is found in the cytoplasm. The catalysed reaction is Endonucleolytic cleavage to 5'-phosphomonoester.. Functionally, digests double-stranded RNA. Involved in the processing of primary rRNA transcript to yield the immediate precursors to the large and small rRNAs (23S and 16S). Processes some mRNAs, and tRNAs when they are encoded in the rRNA operon. Processes pre-crRNA and tracrRNA of type II CRISPR loci if present in the organism. The chain is Ribonuclease 3 from Streptococcus pneumoniae (strain Taiwan19F-14).